We begin with the raw amino-acid sequence, 921 residues long: MEYKNTLLMPKTEFPMRGNLPKREPAMQEKWAEMNIYEKVQEHTKGRPLFVLHDGPPYANGDIHMGHALNKVLKDFIVRYKSMTGFSAPYVPGWDTHGLPIEQALTNKGVKRKEMTVAEFRKLCAEYAYEQVERQREQFKRLGVRADWDNPYITLEPAYEAQQIKVFGDMAKKGYIYKGQKPVYWSPTSESALAEAEIEYQDKKSASIYVAFPVKDGKNVLEGDEKYIIWTTTPWTLPANLGISVHPELEYSIVKVNDEKYIIASELFETVAKTLEWENAEVVKTVKGSELEYTVAKHPFYDRDSLVMLGDHVTTDAGTGCVHTAPGHGEDDFVVGKKYGLEVLCPVDDKGVLTNEAPGFEGLFYDKANKPITEKLEEVGALLKLTFITHSYPHDWRTKKPIIFRATAQWFASIEAFRKELIEAVAETKWVPAWGETRLHNMVRDRGDWCISRQRAWGVPIPVFYAENGDPIITDETINHVADLFREHGSNVWFEREAKDLLPEGFTHPGSPNGEFRKETDIMDVWFDSGSSHQAVLEEREDLQRPADLYLEGSDQYRGWFNSSLSTAVAVTGKAPYKGVLSHGFVLDGEGRKMSKSIGNIVVPKKIMDQLGGDILRLWVSSVDYQSDVRISDDILKQVAEVYRKIRNTFRFLLGNLDDFKPSENAVAVAELREVDRYMLVKLNDLITKVKEAYETYDFAAVYHAIHNFCTIDLSSFYLDFAKDILYIEGANHEDRRAIQTVLYDVLVALTKLVTPILPHTADEVWPYIPGVTEESVQLTDMPEAVQLYDAEALKTKWDAFMTLRDDVLKALEVARNEKVIGKSLNASITLYPTAEMKAMLESISEDLKQLFIVSEYKLGGMMEEAPADAPKYEHTAVVVAQATGETCERCWVVSETIGKDAEHETLCERCATVVKENYVK.

A 'HIGH' region motif is present at residues Pro-57–His-67. Residue Glu-552 coordinates L-isoleucyl-5'-AMP. A 'KMSKS' region motif is present at residues Lys-593–Ser-597. Lys-596 is an ATP binding site. Zn(2+) contacts are provided by Cys-888, Cys-891, Cys-908, and Cys-911.

This sequence belongs to the class-I aminoacyl-tRNA synthetase family. IleS type 1 subfamily. Monomer. It depends on Zn(2+) as a cofactor.

Its subcellular location is the cytoplasm. The enzyme catalyses tRNA(Ile) + L-isoleucine + ATP = L-isoleucyl-tRNA(Ile) + AMP + diphosphate. Its function is as follows. Catalyzes the attachment of isoleucine to tRNA(Ile). As IleRS can inadvertently accommodate and process structurally similar amino acids such as valine, to avoid such errors it has two additional distinct tRNA(Ile)-dependent editing activities. One activity is designated as 'pretransfer' editing and involves the hydrolysis of activated Val-AMP. The other activity is designated 'posttransfer' editing and involves deacylation of mischarged Val-tRNA(Ile). The chain is Isoleucine--tRNA ligase from Bacillus cereus (strain G9842).